Here is a 481-residue protein sequence, read N- to C-terminus: Dihydrolipoyl dehydrogenase (481 aa).

FAD-binding positions include 34-42 (EREHMGGIC) and Lys51. A disulfide bridge links Cys42 with Cys47. Residues 195–199 (GSGAI), Glu218, and 284–287 (AVGV) contribute to the NAD(+) site. FAD is bound by residues Asp326 and Ala334. His460 functions as the Proton acceptor in the catalytic mechanism.

It belongs to the class-I pyridine nucleotide-disulfide oxidoreductase family. As to quaternary structure, homodimer. Requires FAD as cofactor.

It localises to the cytoplasm. It carries out the reaction N(6)-[(R)-dihydrolipoyl]-L-lysyl-[protein] + NAD(+) = N(6)-[(R)-lipoyl]-L-lysyl-[protein] + NADH + H(+). Functionally, lipoamide dehydrogenase is a component of the alpha-ketoacid dehydrogenase complexes. The protein is Dihydrolipoyl dehydrogenase (lpdA) of Rhizobium etli (strain ATCC 51251 / DSM 11541 / JCM 21823 / NBRC 15573 / CFN 42).